The following is a 1333-amino-acid chain: NPC1-like intracellular cholesterol transporter 1 (1333 aa).

A signal peptide spans 1–20 (MAAAWQGWLLWALLLNSAQG). Topologically, residues 21–284 (ELYTPTHKAG…SFYMGRMPGW (264 aa)) are extracellular. 9 disulfides stabilise this stretch: Cys-32/Cys-90, Cys-38/Cys-56, Cys-77/Cys-125, Cys-91/Cys-129, Cys-113/Cys-254, Cys-116/Cys-172, Cys-189/Cys-197, Cys-243/Cys-259, and Cys-256/Cys-263. Residues 285–305 (LALIIIFTAVFVLLSVVLVYL) traverse the membrane as a helical segment. Residues 306 to 352 (RVASNRNKNKTAGSQEAPNLPRKRRFSPHTVLGRFFESWGTRVASWP) are Cytoplasmic-facing. A helical transmembrane segment spans residues 353 to 373 (LTVLALSFIVVIALSVGLTFI). Residues 374 to 632 (ELTTDPVELW…DEINRTTIQD (259 aa)) are Extracellular-facing. Cystine bridges form between Cys-471–Cys-485 and Cys-525–Cys-542. The SSD domain maps to 632–797 (DLPVFAISYL…MTAFVALLSL (166 aa)). The helical transmembrane segment at 633 to 653 (LPVFAISYLIVFLYISLALGS) threads the bilayer. Over 654–665 (YSRWSRVAVDSK) the chain is Cytoplasmic. A helical membrane pass occupies residues 666-686 (ATLGLGGVAVVLGAVVAAMGF). Over 687-696 (YSYLGVPSSL) the chain is Extracellular. Residues 697–717 (VIIQVVPFLVLAVGADNIFIF) form a helical membrane-spanning segment. Residues 718 to 742 (VLEYQRLPRMPGEQREAHIGRTLGS) are Cytoplasmic-facing. Residues 743 to 763 (VAPSMLLCSLSEAICFFLGAL) form a helical membrane-spanning segment. Topologically, residues 764–776 (TSMPAVRTFALTS) are extracellular. A helical membrane pass occupies residues 777 to 797 (GLAIIFDFLLQMTAFVALLSL). Topologically, residues 798 to 846 (DSKRQEASRPDVVCCFSSRNLPPPKQKEGLLLCFFRKIYTPFLLHRFIR) are cytoplasmic. The helical transmembrane segment at 847–867 (PVVLLLFLVLFGANLYLMCNI) threads the bilayer. At 868–1113 (SVGLDQDLAL…QQYLTVLPEG (246 aa)) the chain is on the extracellular side. 3 disulfide bridges follow: Cys-920-Cys-925, Cys-967-Cys-1025, and Cys-981-Cys-990. The helical transmembrane segment at 1114–1134 (IFTLALCFVPTFVVCYLLLGL) threads the bilayer. Residues 1135-1142 (DIRSGILN) lie on the Cytoplasmic side of the membrane. A helical transmembrane segment spans residues 1143 to 1163 (LLSIIMILVDTIGLMAVWGIS). The Extracellular portion of the chain corresponds to 1164 to 1165 (YN). A helical transmembrane segment spans residues 1166–1186 (AVSLINLVTAVGMSVEFVSHI). Over 1187–1206 (TRSFAVSTKPTRLERAKDAT) the chain is Cytoplasmic. Residues 1207–1227 (IFMGSAVFAGVAMTNFPGILI) form a helical membrane-spanning segment. Residues 1228–1242 (LGFAQAQLIQIFFFR) are Extracellular-facing. The helical transmembrane segment at 1243–1263 (LNLLITLLGLLHGLVFLPVVL) threads the bilayer. Residues 1264–1333 (SYLGPDVNQA…SSLPKSDQKF (70 aa)) are Cytoplasmic-facing.

Belongs to the patched family. Interacts with RAB11A, MYO5B and RAB11FIP2. Interaction with RAB11A, MYO5B and RAB11FIP2 is required for proper transport to the plasma membrane upon cholesterol depletion. Interacts with NPC2. Interacts with LIMA1. Highly glycosylated. Expressed in small intestine, stomach and muscle, along with detectable expression in lung, heart, gall bladder, brain, testis, skin and liver. Expression in liver is extremely low.

It localises to the apical cell membrane. The protein localises to the cell membrane. It carries out the reaction cholesterol(in) = cholesterol(out). The enzyme catalyses sitosterol(out) = sitosterol(in). In terms of biological role, plays a major role in cholesterol homeostasis. Critical for the uptake of cholesterol across the plasma membrane of the intestinal enterocyte. Involved in plant sterol absorption, it transports sitosterol, although at lower rates than cholesterol. May have a function in the transport of multiple lipids and their homeostasis, thereby influencing lipid metabolism regulation. May be involved in caveolin trafficking from the plasma membrane. Acts as a negative regulator of NPC2 and down-regulates its expression and secretion by inhibiting its maturation and accelerating its degradation. The sequence is that of NPC1-like intracellular cholesterol transporter 1 from Mus musculus (Mouse).